A 240-amino-acid polypeptide reads, in one-letter code: UDP-2,3-diacylglucosamine hydrolase (240 aa).

Mn(2+) contacts are provided by Asp-8, His-10, Asp-41, Asn-78, and His-113. 78 to 79 contacts substrate; sequence NR. Residues Asp-121, Ser-159, Asn-163, Lys-166, and His-194 each contribute to the substrate site. The Mn(2+) site is built by His-194 and His-196.

This sequence belongs to the LpxH family. Requires Mn(2+) as cofactor.

The protein resides in the cell inner membrane. It catalyses the reaction UDP-2-N,3-O-bis[(3R)-3-hydroxytetradecanoyl]-alpha-D-glucosamine + H2O = 2-N,3-O-bis[(3R)-3-hydroxytetradecanoyl]-alpha-D-glucosaminyl 1-phosphate + UMP + 2 H(+). The protein operates within glycolipid biosynthesis; lipid IV(A) biosynthesis; lipid IV(A) from (3R)-3-hydroxytetradecanoyl-[acyl-carrier-protein] and UDP-N-acetyl-alpha-D-glucosamine: step 4/6. Functionally, hydrolyzes the pyrophosphate bond of UDP-2,3-diacylglucosamine to yield 2,3-diacylglucosamine 1-phosphate (lipid X) and UMP by catalyzing the attack of water at the alpha-P atom. Involved in the biosynthesis of lipid A, a phosphorylated glycolipid that anchors the lipopolysaccharide to the outer membrane of the cell. This Shewanella baltica (strain OS155 / ATCC BAA-1091) protein is UDP-2,3-diacylglucosamine hydrolase.